Reading from the N-terminus, the 338-residue chain is Putative pectinesterase 63 (338 aa).

The N-terminal stretch at 1-24 (MGYNYVSLIVTILLVVITSPVVFG) is a signal peptide. Residues T116 and Q151 each contribute to the substrate site. D174 functions as the Proton donor in the catalytic mechanism. The Nucleophile role is filled by D195. R252 is a substrate binding site.

This sequence belongs to the pectinesterase family.

The protein resides in the secreted. The protein localises to the cell wall. It carries out the reaction [(1-&gt;4)-alpha-D-galacturonosyl methyl ester](n) + n H2O = [(1-&gt;4)-alpha-D-galacturonosyl](n) + n methanol + n H(+). The protein operates within glycan metabolism; pectin degradation; 2-dehydro-3-deoxy-D-gluconate from pectin: step 1/5. Acts in the modification of cell walls via demethylesterification of cell wall pectin. The protein is Putative pectinesterase 63 (PME63) of Arabidopsis thaliana (Mouse-ear cress).